A 204-amino-acid polypeptide reads, in one-letter code: Large ribosomal subunit protein uL4 (204 aa).

The segment covering 42-55 has biased composition (polar residues); it reads GSRQGSKAQKNRSA. The interval 42 to 85 is disordered; it reads GSRQGSKAQKNRSAVSGGGKRPWAQKGTGRARAGTTRGPIWRSG. A compositionally biased stretch (low complexity) spans 68–79; the sequence is GTGRARAGTTRG.

Belongs to the universal ribosomal protein uL4 family. As to quaternary structure, part of the 50S ribosomal subunit.

In terms of biological role, one of the primary rRNA binding proteins, this protein initially binds near the 5'-end of the 23S rRNA. It is important during the early stages of 50S assembly. It makes multiple contacts with different domains of the 23S rRNA in the assembled 50S subunit and ribosome. Forms part of the polypeptide exit tunnel. This chain is Large ribosomal subunit protein uL4, found in Vesicomyosocius okutanii subsp. Calyptogena okutanii (strain HA).